A 164-amino-acid chain; its full sequence is Large ribosomal subunit protein uL10 (164 aa).

The protein belongs to the universal ribosomal protein uL10 family. Part of the ribosomal stalk of the 50S ribosomal subunit. The N-terminus interacts with L11 and the large rRNA to form the base of the stalk. The C-terminus forms an elongated spine to which L12 dimers bind in a sequential fashion forming a multimeric L10(L12)X complex.

Forms part of the ribosomal stalk, playing a central role in the interaction of the ribosome with GTP-bound translation factors. This chain is Large ribosomal subunit protein uL10, found in Helicobacter pylori (strain P12).